The chain runs to 399 residues: Zinc finger TRAF-type-containing protein 1 (399 aa).

A compositionally biased stretch (gly residues) spans 1–13 (MSGAEEAGGGGPA). The segment at 1–21 (MSGAEEAGGGGPAAGPAGAVP) is disordered. Residues 106–151 (CTVCLDLPKASVYQCTNGHLMCAGCFIHLLADARLKEEQATCPNCR) form an RING-type; degenerate zinc finger. The segment at 152 to 210 (CEISKSLCCRNLAVEKAVSELPSECGFCLRQFPRSLLERHQKEECQDRVTQCKYKRIGC) adopts a TRAF-type zinc-finger fold.

This sequence belongs to the ZFTRAF1 family. In terms of assembly, interacts with LGALS3. Expressed in heart, brain, liver, testis and kidney.

It is found in the cytoplasm. The protein resides in the perinuclear region. The polypeptide is Zinc finger TRAF-type-containing protein 1 (Mus musculus (Mouse)).